Consider the following 27-residue polypeptide: Antimicrobial peptide 1 (27 aa).

Expressed by the skin glands.

Its subcellular location is the secreted. In terms of biological role, has very weak antimicrobial activity against Gram-positive bacterium S.aureus and Gram-negative bacterium E.coli and stronger activity against yeast C.albicans. Enhances the antibacterial activity of XT3. Has hemolytic activity against human red blood cells. The chain is Antimicrobial peptide 1 from Xenopus tropicalis (Western clawed frog).